Consider the following 173-residue polypeptide: U4/U6.U5 small nuclear ribonucleoprotein component snu23 (173 aa).

The segment at 55 to 85 (WYCEACNETYKDSLSWLDHLNSTQHLRKTRT) adopts a Matrin-type zinc-finger fold. The stretch at 119–149 (SLKERVERYHQELEAKKLRRKQKKVNKEKNS) forms a coiled coil.

Component of the 25S U4/U6.U5 tri-snRNP particle, a subcomplex of the spliceosome.

The protein resides in the cytoplasm. It is found in the cytoskeleton. It localises to the microtubule organizing center. Its subcellular location is the spindle pole body. The protein localises to the nucleus. The sequence is that of U4/U6.U5 small nuclear ribonucleoprotein component snu23 (snu23) from Schizosaccharomyces pombe (strain 972 / ATCC 24843) (Fission yeast).